Reading from the N-terminus, the 149-residue chain is Oocyte-expressed protein homolog (149 aa).

Residues 1-23 (MVDDAGTAESQRGKQTPADSLEQ) are disordered. A compositionally biased stretch (polar residues) spans 8–18 (AESQRGKQTPA). The 62-residue stretch at 49–110 (PLVFYLEAWL…SVQNRVKSML (62 aa)) folds into the KH; atypical domain.

This sequence belongs to the KHDC1 family. As to quaternary structure, component of the subcortical maternal complex (SCMC), at least composed of NLRP5, KHDC3, OOEP, and TLE6. Within the complex, interacts with NLRP5, KHDC3 and TLE6. As part of the SCMC interacts with the SCMC-associated protein NLRP4F. The SCMC may facilitate translocation of its components between the nuclear and cytoplasmic compartments. Forms a scaffold complex with KHDC3/FILIA, and interacts with BLM and TRIM25 at DNA replication forks.

The protein localises to the cytoplasm. The protein resides in the nucleus. Functionally, component of the subcortical maternal complex (SCMC), a multiprotein complex that plays a key role in early embryonic development. The SCMC complex is a structural constituent of cytoplasmic lattices, which consist in fibrous structures found in the cytoplasm of oocytes and preimplantation embryos. They are required to store maternal proteins critical for embryonic development, such as proteins that control epigenetic reprogramming of the preimplantation embryo, and prevent their degradation or activation. As part of the OOEP-KHDC3 scaffold, recruits BLM and TRIM25 to DNA replication forks, thereby promoting the ubiquitination of BLM by TRIM25, enhancing BLM retainment at replication forks and therefore promoting stalled replication fork restart. Positively regulates the homologous recombination-mediated DNA double-strand break (DSB) repair pathway by regulating ATM activation and RAD51 recruitment to DSBs in oocytes. Thereby contributes to oocyte survival and the resumption and completion of meiosis. This chain is Oocyte-expressed protein homolog (OOEP), found in Papio anubis (Olive baboon).